A 1691-amino-acid chain; its full sequence is Helicase SWR1 (1691 aa).

Positions Met-1–Pro-244 are disordered. Basic and acidic residues-rich tracts occupy residues Ser-14 to Gln-23 and Glu-54 to Pro-68. Residues Leu-126 to Lys-155 are compositionally biased toward polar residues. A compositionally biased stretch (low complexity) spans Ser-232 to Ser-243. Residues Pro-335–Ile-409 form the HSA domain. 2 disordered regions span residues Gln-457–Leu-615 and Met-628–Ile-801. Residues Gln-467–Gln-521 are compositionally biased toward acidic residues. A compositionally biased stretch (low complexity) spans Val-564 to Ala-575. Composition is skewed to acidic residues over residues Glu-576–Ala-612 and Glu-645–Glu-662. Basic and acidic residues predominate over residues Pro-671 to Gln-692. 2 stretches are compositionally biased toward polar residues: residues Gly-706–Asn-722 and Pro-749–Thr-778. The Helicase ATP-binding domain occupies Ala-823 to Ala-988. An ATP-binding site is contributed by Asp-836–Thr-843. The DEAH box motif lies at Asp-939 to His-942. Residues Ile-1375–Thr-1525 enclose the Helicase C-terminal domain. 2 disordered regions span residues Glu-1594 to Asp-1632 and Asp-1669 to Arg-1691. The segment covering Lys-1605–Gln-1618 has biased composition (polar residues). Positions Asp-1677–Arg-1691 are enriched in basic residues.

The protein belongs to the SNF2/RAD54 helicase family. SWR1 subfamily. In terms of assembly, component of the SWR1 chromatin-remodeling complex.

Its subcellular location is the nucleus. The catalysed reaction is ATP + H2O = ADP + phosphate + H(+). Catalytic component of the SWR1 complex which mediates the ATP-dependent exchange of histone H2A for the H2A variant HZT1 leading to transcriptional regulation of selected genes by chromatin remodeling. The chain is Helicase SWR1 (SWR1) from Gibberella zeae (strain ATCC MYA-4620 / CBS 123657 / FGSC 9075 / NRRL 31084 / PH-1) (Wheat head blight fungus).